The primary structure comprises 375 residues: MPRPIQAVIHGPALVNNLQVVRRHAADSRVWAVIKANAYGHGIERAYEGLRQADGFGLLDLDEAVRLRQLGWQGPILLLEGFFKPEDLALVEQYRLTTTVHCEEQLRMLELARLKGPVSIQLKINTGMSRLGFAPAAYRAAWEHARAISGIGTIVHMTHFSDADGPRGIDHQLAAFEQATQGLPGEASLSNSAATLWHPRAHRDWVRPGVILYGASPTGVAADIEGTGLMPAMTLKSELIAVQDLQPGATVGYGSRFEAEQPMRIGIVACGYADGYPRHAPGWDGNYTPVLVDGVRTRMVGRVSMDMITVDLAEVPGARVGAPVTLWGQGLPIDEVAHAAGTVGYELMCALAPRVPVTVEPAGAADAGETLGKAA.

Residue Lys35 is the Proton acceptor; specific for D-alanine of the active site. An N6-(pyridoxal phosphate)lysine modification is found at Lys35. Arg130 serves as a coordination point for substrate. The active-site Proton acceptor; specific for L-alanine is Tyr253. Met305 lines the substrate pocket.

This sequence belongs to the alanine racemase family. The cofactor is pyridoxal 5'-phosphate.

The catalysed reaction is L-alanine = D-alanine. It functions in the pathway amino-acid biosynthesis; D-alanine biosynthesis; D-alanine from L-alanine: step 1/1. Functionally, catalyzes the interconversion of L-alanine and D-alanine. May also act on other amino acids. The protein is Alanine racemase (alr) of Ralstonia nicotianae (strain ATCC BAA-1114 / GMI1000) (Ralstonia solanacearum).